The chain runs to 394 residues: S-adenosylmethionine synthase 1 (394 aa).

E11 contributes to the Mg(2+) binding site. H17 serves as a coordination point for ATP. E45 provides a ligand contact to K(+). Residues E58 and Q101 each contribute to the L-methionine site. Residues 169 to 171 (DGK), 237 to 240 (SGRF), D248, 254 to 255 (RK), A271, K275, and K279 contribute to the ATP site. L-methionine is bound at residue D248. Residue K279 participates in L-methionine binding.

The protein belongs to the AdoMet synthase family. As to quaternary structure, homotetramer. The cofactor is Mn(2+). Mg(2+) serves as cofactor. It depends on Co(2+) as a cofactor. Requires K(+) as cofactor.

The protein localises to the cytoplasm. The enzyme catalyses L-methionine + ATP + H2O = S-adenosyl-L-methionine + phosphate + diphosphate. The protein operates within amino-acid biosynthesis; S-adenosyl-L-methionine biosynthesis; S-adenosyl-L-methionine from L-methionine: step 1/1. Its function is as follows. Catalyzes the formation of S-adenosylmethionine from methionine and ATP. The reaction comprises two steps that are both catalyzed by the same enzyme: formation of S-adenosylmethionine (AdoMet) and triphosphate, and subsequent hydrolysis of the triphosphate. This is S-adenosylmethionine synthase 1 (SAMS1) from Triticum monococcum (Einkorn wheat).